The primary structure comprises 207 residues: Na(+)-translocating NADH-quinone reductase subunit D (207 aa).

A run of 6 helical transmembrane segments spans residues 20–40 (IALQ…LQTA), 41–61 (FVMA…ISMI), 69–89 (IRII…DQIL), 102–122 (VFVG…AFAM), 130–150 (FVDG…VAFL), and 177–197 (NGLF…IWAI).

Belongs to the NqrDE/RnfAE family. Composed of six subunits; NqrA, NqrB, NqrC, NqrD, NqrE and NqrF.

Its subcellular location is the cell inner membrane. The enzyme catalyses a ubiquinone + n Na(+)(in) + NADH + H(+) = a ubiquinol + n Na(+)(out) + NAD(+). In terms of biological role, NQR complex catalyzes the reduction of ubiquinone-1 to ubiquinol by two successive reactions, coupled with the transport of Na(+) ions from the cytoplasm to the periplasm. NqrA to NqrE are probably involved in the second step, the conversion of ubisemiquinone to ubiquinol. The polypeptide is Na(+)-translocating NADH-quinone reductase subunit D (Haemophilus ducreyi (strain 35000HP / ATCC 700724)).